The sequence spans 500 residues: GTPase Der (500 aa).

EngA-type G domains lie at 3 to 166 (PVVA…MEEL) and 211 to 384 (IKLA…VSAT). Residues 9 to 16 (GRPNVGKS), 56 to 60 (DTGGI), 118 to 121 (NKID), 217 to 224 (GRPNVGKS), 264 to 268 (DTAGV), and 329 to 332 (NKWD) contribute to the GTP site. Positions 385–469 (KRVGTSVLTR…PIRIQFQNSE (85 aa)) constitute a KH-like domain. The segment at 481–500 (LSQERQRKRLVGAVKNRNKK) is disordered. Basic residues predominate over residues 486-500 (QRKRLVGAVKNRNKK).

The protein belongs to the TRAFAC class TrmE-Era-EngA-EngB-Septin-like GTPase superfamily. EngA (Der) GTPase family. As to quaternary structure, associates with the 50S ribosomal subunit.

GTPase that plays an essential role in the late steps of ribosome biogenesis. This Aliivibrio salmonicida (strain LFI1238) (Vibrio salmonicida (strain LFI1238)) protein is GTPase Der.